The chain runs to 206 residues: ATP-dependent dethiobiotin synthetase BioD (206 aa).

Asp-12–Leu-17 contacts ATP. Thr-16 lines the Mg(2+) pocket. Residue Lys-32 is part of the active site. Glu-99 is a binding site for Mg(2+). Glu-99–Gly-102 lines the ATP pocket.

It belongs to the dethiobiotin synthetase family. Homodimer. Mg(2+) is required as a cofactor.

The protein localises to the cytoplasm. It carries out the reaction (7R,8S)-7,8-diammoniononanoate + CO2 + ATP = (4R,5S)-dethiobiotin + ADP + phosphate + 3 H(+). It functions in the pathway cofactor biosynthesis; biotin biosynthesis; biotin from 7,8-diaminononanoate: step 1/2. Functionally, catalyzes a mechanistically unusual reaction, the ATP-dependent insertion of CO2 between the N7 and N8 nitrogen atoms of 7,8-diaminopelargonic acid (DAPA, also called 7,8-diammoniononanoate) to form a ureido ring. This is ATP-dependent dethiobiotin synthetase BioD from Cytophaga hutchinsonii (strain ATCC 33406 / DSM 1761 / CIP 103989 / NBRC 15051 / NCIMB 9469 / D465).